We begin with the raw amino-acid sequence, 565 residues long: NAD-dependent malic enzyme (565 aa).

Residue Tyr104 is the Proton donor of the active site. NAD(+) is bound at residue Arg157. The active-site Proton acceptor is the Lys175. Residues Glu246, Asp247, and Asp270 each contribute to the a divalent metal cation site. Asp270 and Asn418 together coordinate NAD(+).

The protein belongs to the malic enzymes family. As to quaternary structure, homotetramer. Mg(2+) is required as a cofactor. Requires Mn(2+) as cofactor.

The catalysed reaction is (S)-malate + NAD(+) = pyruvate + CO2 + NADH. It catalyses the reaction oxaloacetate + H(+) = pyruvate + CO2. The polypeptide is NAD-dependent malic enzyme (Salmonella agona (strain SL483)).